A 346-amino-acid chain; its full sequence is Phosphate acyltransferase (346 aa).

The protein belongs to the PlsX family. Homodimer. Probably interacts with PlsY.

The protein localises to the cytoplasm. It catalyses the reaction a fatty acyl-[ACP] + phosphate = an acyl phosphate + holo-[ACP]. It participates in lipid metabolism; phospholipid metabolism. Catalyzes the reversible formation of acyl-phosphate (acyl-PO(4)) from acyl-[acyl-carrier-protein] (acyl-ACP). This enzyme utilizes acyl-ACP as fatty acyl donor, but not acyl-CoA. The polypeptide is Phosphate acyltransferase (Delftia acidovorans (strain DSM 14801 / SPH-1)).